Consider the following 2183-residue polypeptide: Genome polyprotein (2183 aa).

A lipid anchor (N-myristoyl glycine; by host) is attached at glycine 2. Residues 2–1493 (GAQVSTQKTG…HVSRAFICLQ (1492 aa)) lie on the Cytoplasmic side of the membrane. Residues 566–582 (FYQGPTEESVERAMGRV) form an amphipathic alpha-helix region. Residues histidine 870 and aspartate 888 each act as for protease 2A activity in the active site. Cysteine 905 and cysteine 907 together coordinate Zn(2+). The active-site For protease 2A activity is cysteine 959. Positions 965 and 967 each coordinate Zn(2+). Residues 1099–1171 (NNGWLKKFTE…EQSAPSQSDQ (73 aa)) form a membrane-binding region. Residues 1099–1237 (NNGWLKKFTE…SPGAGKSVAT (139 aa)) form an oligomerization region. The RNA-binding stretch occupies residues 1120 to 1124 (AVKIQ). The region spanning 1203–1359 (EKKMSNYIQF…SMYSQNGKIN (157 aa)) is the SF3 helicase domain. 3 residues coordinate Zn(2+): cysteine 1367, cysteine 1379, and cysteine 1384. The segment at 1367–1384 (CDEECCPVNFKRCCPLVC) adopts a C4-type; degenerate zinc-finger fold. Positions 1411-1418 (EYNHRHSV) are RNA-binding. Positions 1422-1427 (LEALFQ) are oligomerization. An intramembrane segment occupies 1494 to 1509 (ALTTFVSVAGIIYIIY). At 1510 to 2183 (KLFAGFQGAY…TLRRKWLDSF (674 aa)) the chain is on the cytoplasmic side. An O-(5'-phospho-RNA)-tyrosine modification is found at tyrosine 1519. Residues 1539-1717 (GPAFEFAVAM…FSAGLLKHYF (179 aa)) form the Peptidase C3 domain. Active-site for protease 3C activity residues include histidine 1578, glutamate 1609, and cysteine 1685. Positions 1948–2064 (GHLIAFDYSG…SYPWPIDASL (117 aa)) constitute a RdRp catalytic domain. 2 residues coordinate Mg(2+): aspartate 1954 and aspartate 2050.

This sequence belongs to the picornaviruses polyprotein family. Interacts with capsid protein VP1 and capsid protein VP3 to form heterotrimeric protomers. As to quaternary structure, interacts with capsid protein VP0, and capsid protein VP3 to form heterotrimeric protomers. Five protomers subsequently associate to form pentamers which serve as building blocks for the capsid. Interacts with capsid protein VP2, capsid protein VP3 and capsid protein VP4 following cleavage of capsid protein VP0. Interacts with host CXADR. In terms of assembly, interacts with capsid protein VP1 and capsid protein VP3 in the mature capsid. Interacts with capsid protein VP0 and capsid protein VP1 to form heterotrimeric protomers. Five protomers subsequently associate to form pentamers which serve as building blocks for the capsid. Interacts with capsid protein VP4 in the mature capsid. Interacts with protein 2C; this interaction may be important for virion morphogenesis. As to quaternary structure, interacts with capsid protein VP1 and capsid protein VP3. In terms of assembly, homodimer. Homohexamer; forms a hexameric ring structure with 6-fold symmetry characteristic of AAA+ ATPases. Interacts (via N-terminus) with host RTN3 (via reticulon domain); this interaction is important for viral replication. Interacts with capsid protein VP3; this interaction may be important for virion morphogenesis. As to quaternary structure, interacts with protein 3CD. In terms of assembly, homodimer. Interacts with host GBF1. Interacts (via GOLD domain) with host ACBD3 (via GOLD domain); this interaction allows the formation of a viral protein 3A/ACBD3 heterotetramer with a 2:2 stoichiometry, which will stimulate the recruitment of host PI4KB in order to synthesize PI4P at the viral RNA replication sites. Interacts with RNA-directed RNA polymerase. As to quaternary structure, interacts with protein 3AB and with RNA-directed RNA polymerase. In terms of assembly, interacts with Viral protein genome-linked and with protein 3CD. The cofactor is Mg(2+). Post-translationally, specific enzymatic cleavages in vivo by the viral proteases yield processing intermediates and the mature proteins. Myristoylation is required for the formation of pentamers during virus assembly. Further assembly of 12 pentamers and a molecule of genomic RNA generates the provirion. In terms of processing, during virion maturation, immature virions are rendered infectious following cleavage of VP0 into VP4 and VP2. This maturation seems to be an autocatalytic event triggered by the presence of RNA in the capsid and it is followed by a conformational change infectious virion. Post-translationally, myristoylation is required during RNA encapsidation and formation of the mature virus particle. VPg is uridylylated by the polymerase into VPg-pUpU. This acts as a nucleotide-peptide primer for the genomic RNA replication.

It is found in the virion. Its subcellular location is the host cytoplasm. The protein localises to the host cytoplasmic vesicle membrane. It localises to the host nucleus. It catalyses the reaction a ribonucleoside 5'-triphosphate + H2O = a ribonucleoside 5'-diphosphate + phosphate + H(+). The enzyme catalyses Selective cleavage of Tyr-|-Gly bond in the picornavirus polyprotein.. The catalysed reaction is RNA(n) + a ribonucleoside 5'-triphosphate = RNA(n+1) + diphosphate. It carries out the reaction Selective cleavage of Gln-|-Gly bond in the poliovirus polyprotein. In other picornavirus reactions Glu may be substituted for Gln, and Ser or Thr for Gly.. Its activity is regulated as follows. Replication or transcription is subject to high level of random mutations by the nucleotide analog ribavirin. Forms an icosahedral capsid of pseudo T=3 symmetry with capsid proteins VP2 and VP3. The capsid is 300 Angstroms in diameter, composed of 60 copies of each capsid protein and enclosing the viral positive strand RNA genome. Capsid protein VP1 mainly forms the vertices of the capsid. Capsid protein VP1 interacts with host CXADR to provide virion attachment to target host cells. This attachment induces virion internalization. Tyrosine kinases are probably involved in the entry process. After binding to its receptor, the capsid undergoes conformational changes. Capsid protein VP1 N-terminus (that contains an amphipathic alpha-helix) and capsid protein VP4 are externalized. Together, they shape a pore in the host membrane through which viral genome is translocated to host cell cytoplasm. In terms of biological role, forms an icosahedral capsid of pseudo T=3 symmetry with capsid proteins VP2 and VP3. The capsid is 300 Angstroms in diameter, composed of 60 copies of each capsid protein and enclosing the viral positive strand RNA genome. Functionally, lies on the inner surface of the capsid shell. After binding to the host receptor, the capsid undergoes conformational changes. Capsid protein VP4 is released, Capsid protein VP1 N-terminus is externalized, and together, they shape a pore in the host membrane through which the viral genome is translocated into the host cell cytoplasm. Its function is as follows. Component of immature procapsids, which is cleaved into capsid proteins VP4 and VP2 after maturation. Allows the capsid to remain inactive before the maturation step. Cysteine protease that cleaves viral polyprotein and specific host proteins. It is responsible for the autocatalytic cleavage between the P1 and P2 regions, which is the first cleavage occurring in the polyprotein. Also cleaves the host translation initiation factor EIF4G1, in order to shut down the capped cellular mRNA translation. Inhibits the host nucleus-cytoplasm protein and RNA trafficking by cleaving host members of the nuclear pores. Counteracts stress granule formation probably by antagonizing its assembly or promoting its dissassembly. Cleaves and inhibits host IFIH1/MDA5, thereby inhibiting the type-I IFN production and the establishment of the antiviral state. Cleaves and inhibits host MAVS, thereby inhibiting the type-I IFN production and the establishment of the antiviral state. In terms of biological role, plays an essential role in the virus replication cycle by acting as a viroporin. Creates a pore in the host endoplasmic reticulum and as a consequence releases Ca2+ in the cytoplasm of infected cell. In turn, high levels of cytoplasmic calcium may trigger membrane trafficking and transport of viral ER-associated proteins to viroplasms, sites of viral genome replication. Functionally, induces and associates with structural rearrangements of intracellular membranes. Displays RNA-binding, nucleotide binding and NTPase activities. May play a role in virion morphogenesis and viral RNA encapsidation by interacting with the capsid protein VP3. Its function is as follows. Localizes the viral replication complex to the surface of membranous vesicles. Together with protein 3CD binds the Cis-Active RNA Element (CRE) which is involved in RNA synthesis initiation. Acts as a cofactor to stimulate the activity of 3D polymerase, maybe through a nucleid acid chaperone activity. Localizes the viral replication complex to the surface of membranous vesicles. It inhibits host cell endoplasmic reticulum-to-Golgi apparatus transport and causes the disassembly of the Golgi complex, possibly through GBF1 interaction. This would result in depletion of MHC, trail receptors and IFN receptors at the host cell surface. Plays an essential role in viral RNA replication by recruiting ACBD3 and PI4KB at the viral replication sites, thereby allowing the formation of the rearranged membranous structures where viral replication takes place. In terms of biological role, acts as a primer for viral RNA replication and remains covalently bound to viral genomic RNA. VPg is uridylylated prior to priming replication into VPg-pUpU. The oriI viral genomic sequence may act as a template for this. The VPg-pUpU is then used as primer on the genomic RNA poly(A) by the RNA-dependent RNA polymerase to replicate the viral genome. During genome replication, the VPg-RNA linkage is removed by the host TDP2, thereby accelerating replication. During the late stage of the replication cycle, host TDP2 is excluded from sites of viral RNA synthesis and encapsidation, allowing for the generation of progeny virions. Functionally, involved in the viral replication complex and viral polypeptide maturation. It exhibits protease activity with a specificity and catalytic efficiency that is different from protease 3C. Protein 3CD lacks polymerase activity. Protein 3CD binds to the 5'UTR of the viral genome. Its function is as follows. Replicates the viral genomic RNA on the surface of intracellular membranes. May form linear arrays of subunits that propagate along a strong head-to-tail interaction called interface-I. Covalently attaches UMP to a tyrosine of VPg, which is used to prime RNA synthesis. The positive stranded RNA genome is first replicated at virus induced membranous vesicles, creating a dsRNA genomic replication form. This dsRNA is then used as template to synthesize positive stranded RNA genomes. ss(+)RNA genomes are either translated, replicated or encapsidated. Major viral protease that mediates proteolytic processing of the polyprotein. Cleaves host EIF5B, contributing to host translation shutoff. Also cleaves host PABPC1, contributing to host translation shutoff. Cleaves host NLRP1, triggers host N-glycine-mediated degradation of the autoinhibitory NLRP1 N-terminal fragment. The sequence is that of Genome polyprotein from Coxsackievirus B4 (strain JVB / Benschoten / New York/51).